The chain runs to 130 residues: uncharacterized protein (130 aa).

Positions 1–62 are disordered; that stretch reads MRMYSSDAHE…ASGVGSSCKR (62 aa). Over residues 21–30 the composition is skewed to pro residues; that stretch reads PPHPLPPTGS.

This is an uncharacterized protein from Homo sapiens (Human).